A 408-amino-acid polypeptide reads, in one-letter code: Multidrug resistance protein MdtG (408 aa).

A run of 10 helical transmembrane segments spans residues 13 to 33 (LYIA…VMPF), 51 to 71 (LWSG…SPFW), 89 to 109 (LGMA…QFLL), 112 to 132 (AALG…AIQV), 138 to 158 (GWAL…GPLL), 170 to 190 (PVFF…FFFI), 221 to 241 (LFVT…ILTL), 253 to 273 (LAFI…LSAP), 287 to 307 (ILVA…FVQS), and 375 to 395 (AVFL…WLSL).

Belongs to the major facilitator superfamily. DHA1 family. MdtG (TC 2.A.1.2.20) subfamily.

It localises to the cell inner membrane. The chain is Multidrug resistance protein MdtG from Dickeya zeae (strain Ech586) (Dickeya dadantii (strain Ech586)).